We begin with the raw amino-acid sequence, 443 residues long: Phosphoribosylamine--glycine ligase (443 aa).

In terms of domain architecture, ATP-grasp spans 109–324; sequence RNLFKKYNIK…FLDVCFGISN (216 aa). 140-202 contacts ATP; the sequence is MTGLGKDVVV…EEKLVGVEFT (63 aa). Mg(2+) is bound by residues Gln282, Glu294, and Asn296. Residues Gln282, Glu294, and Asn296 each coordinate Mn(2+).

The protein belongs to the GARS family. Requires Mg(2+) as cofactor. Mn(2+) serves as cofactor.

It carries out the reaction 5-phospho-beta-D-ribosylamine + glycine + ATP = N(1)-(5-phospho-beta-D-ribosyl)glycinamide + ADP + phosphate + H(+). The protein operates within purine metabolism; IMP biosynthesis via de novo pathway; N(1)-(5-phospho-D-ribosyl)glycinamide from 5-phospho-alpha-D-ribose 1-diphosphate: step 2/2. This Methanococcus vannielii (strain ATCC 35089 / DSM 1224 / JCM 13029 / OCM 148 / SB) protein is Phosphoribosylamine--glycine ligase.